The primary structure comprises 2076 residues: MKRHQFRFWIFELREILREIKNSPHFLDSWTKFDSVRSLIHIFFHQERLMKLFDPRIWSILLSRDSQGSTSNRYFIIKGLVLLVVAVLISRINNRNMVERKNLYLRGLLPIPMNSIGPGNETLEESFWSSDINRLIVLLLYLPKGKKTSESCFMDPKESLWLFPINKINQKCIMPESNRGSRWWRNRIGKKRDSSCKISTKTVAGIEISSKEKDLKYLEFLFLSYTDDPIRKDRFFSKVQNVSSNIQYDSTRSIFVQVTDFSQSKGSSDQSRDHFDSISKEDSEYHTLIDQTEIPQLKGRSIPGDPSFLQTERTEIESDRFPKCLSGSSPMSPLFPEHEKQMIIHRLPEEIDEFLGNPTRSIRSFFSDRWSELHMGSNPTDRSTRDQKWLKKQQDVSFVSSRRSENKEMVDIFKIITYLQNTVSIHPISSDPGCDMVPKDEPDMDSSNKISFLNKNPFFDLFHLFHDRNKGGYTLHHDFESEERFQEMADLFTLSITEPDLVYHRGFAFSIDSCGLDQKKLVNGKEKTKDESKKKSLLVLPPLFYEENAFFYRSIRKKPVWIHCGNDLFASNNIMEAVNQYRLIRNLIQIQYSAYGYIRNVLNRFFLMNRSDRNFEYGIQRDQIGNDTLNHITIMKYTINQHLSNLKKSQKKWFDPLISRTERSMNRDPNAYRYKWSNGSKNFQEHLEHFVSEQKNRFQVVFDQLRINQYSINWSEAIDKQDLSKSLRFFLSKSLLFLSKPLRFFLSKSLPLFFVSIGNSPIHRSEIHIYELKGPNEPLCNQLLKSIGVQIIHLHKLKPDHDTSQRSKFLINGGTISPFLFNKIPKWMIDSFHTRKNRSKSFANTDSYFSMISHDRDNWLNPVKPFHRSSLISSFYKANQLRFLNNPHHFWFYCNKRFPFYVEKTRINNYDRTYGQFLNILFIRNKIFSLCVGKKKHLLPIYSQVSDIFIPNDFPQSGDETYNLYKSFRFPIRPDPFVRRALYSIADISGTPLTEEQIVNFERTYCQPLSDMNLSDSEGKNLHQYLSFNSNIGLIHTPCSEKNLPYVKRKKQSLYLRKKRSLYLKKCVEKGQMYRTSQQRDSAFSKWNLFQTYMPWFLTSTGCKYLTSVLLDIFSDRLSILSSSPKLVSILNSIMHRSDISRLIKKWWTILPQWNLISEISSKCLQNLLLSEEMIHRNNESPVSMILTHLRSTNAREFLYSILFLLLVAGYLVRTHLLFVSRVSNELQTELEKIKSLMIPSYMIELQKLLYRYPTSTSKSESESESEYEYELNSFLLNNLFALEQLDWNIDLISIISNTITFSRNTRHLSRTSKEIYSLIRERKNVNSDWIEDRVESWVTINDLIDEDERDLAVQFSTLTTEKRIDQILWSLTHSHPVSKNDLDYQIIEQPGLISLRYLVDIHKKDLMNYEFNGSCLAEKRIFLANYRTITYSQTPSRGKPFSLRLDLSPSRGILVIGSIGTGRSHLVKYLATNSYVPFITVFPDRGLSDRPIYCFMDEDTDPDEDYDYIDDDIDIDSDNFDTELETIADVVTMDNMLLKVIRFDILGQFELAKTMSPCIIWIPNIHDLYLNESNYLSLGLLTNFLSSLYGDCETTRNILVFASTHLPQLVDPVLIDPKKFNTCIKIRRLLSPQQRKHFFNLLYTRGFHSENKMFHANGFGSITMGSNARDLVALTNEVLSISITQKKSILETNTIRLALHRQTWDLRSHVRSVPDHGILFYQIGRAVAQNVLLSNCCTDPISIYMKKKSCNEGFSYLYKWYYELGTSMKKLTILLYLLSCSAGSVAQDLWSPPGPDENSWITSDRFVENDSDLVDSLLEIEGALVGSWLLRSEPRNPLDMMQKRSCSIFKKDESEFAEGEGALALDPQEMLFYNQIVWAPRLWRPPCGKLFDCIEYSQEDDDDWEFWQSGTKYYWMRDSEGGQGFWVSQLKKFLWNPEAADPFLFLFKDQPFVSDSDFSSYHQPFSNFLVELMPPFKASSVSLYKGWVNKKLQEMCLEYLSDRERWLRTNSSLSHGSFRSNTLSESYQYLANLFLSNATLLDQMTKTLLRKRWLFPDEMKDLIHGTGGGTELTGR.

1458 to 1465 (GSIGTGRS) is a binding site for ATP.

It belongs to the Ycf2 family.

The protein resides in the plastid. It is found in the chloroplast stroma. Functionally, probable ATPase of unknown function. Its presence in a non-photosynthetic plant (Epifagus virginiana) and experiments in tobacco indicate that it has an essential function which is probably not related to photosynthesis. In Acorus calamus (Sweet flag), this protein is Protein Ycf2.